The chain runs to 873 residues: MSYFGEHFWGDKNHGFEVLYHCVKQGPVATKELADFIRERANIEETYSKAMAKLSKLASNGTPMGTFAPLWEVFRVSSDKLALCHLELTRKLHDLLKDVLRYGEEQLKTHKKCKEEVLGTVDAVQMLSGVGQLLPKSRENYLSRCMDLERLRRENTSQKEMDKAETKSKKAADSLRRSVDKYNSARADFEIKMLDSALRFQAMEEAHLQHMKALLGSYAHSVEDTHVQIGQVHEEFKQNVENVTVDMLLRKFAESKGTGREKPGPLDFDAYSSAALQEAMKRLRGAKAFRLPGLSRREPRASVDFLESDSGVPPEVDDEGFTVRPDISQNNGAEPPRFSSSDSDFDDEEPRKFYVHIKPAPTRAVACSSEAAAAQLRATAGSLILPPGPGGTMKRHSSRDTSGKPQRPRSAPRTGSCAEKPLASEEPLSKSLFGPPLESAFDHDDFTGSSSLGFTSSPSPFSSSSPENVEDSGLDSPSHAAPGPSPESWVPRPGTPQSPPTCRAQHPEPRGLMPRAPSPGPWGPEGGADSLTPADPTREGLAATLRRPRSRKVSCPLTRSNGDLCRSLSPSPLGSSAPTIPPDRPSFSTQMGHGISRGPSPVVLGSQDALPVATAFTEYVHAYFRGHSPSCLARVTGELTMTFPAGIVRVFSGTPPPPVLSFRLVNTAPVEHFQPNADLIFSDPSQSDPETKDFWLNMAALTEALQHQAEQNPTASYYNLVLLRYQFSRPGPESVPLQMSAHWQCGPTLTRVSVEYSYRAGATAVSTPLTNVQILLPVGEPVTSVRLQPAATWNTEEKRFTWKLPDVCEAGGSGHLSASWQPQSGPSTPSPVAAQFTSEGATLSGLDLELLGGGYRMSLVKRRFATGMYLVSC.

Positions 1 to 248 constitute an F-BAR domain; it reads MSYFGEHFWG…NVENVTVDML (248 aa). Residues 1 to 275 are mediates membrane-binding; that stretch reads MSYFGEHFWG…LDFDAYSSAA (275 aa). The segment at 153-172 is disordered; the sequence is RENTSQKEMDKAETKSKKAA. Residues 155 to 178 are a coiled coil; that stretch reads NTSQKEMDKAETKSKKAADSLRRS. Residues 267-439 are mediates interaction with the adaptor protein complex AP-2; it reads DFDAYSSAAL…KSLFGPPLES (173 aa). Phosphoserine occurs at positions 295, 343, and 368. The interval 302–347 is disordered; sequence SVDFLESDSGVPPEVDDEGFTVRPDISQNNGAEPPRFSSSDSDFDD. Disordered stretches follow at residues 381–600 and 813–833; these read GSLI…RGPS and SGHLSASWQPQSGPSTPSPVA. The segment covering 447 to 466 has biased composition (low complexity); the sequence is TGSSSLGFTSSPSPFSSSSP. Position 518 is a phosphoserine (serine 518). Residues 567–576 show a composition bias toward low complexity; sequence SLSPSPLGSS. The interval 593 to 873 is mediates interaction with AGFG1, CALM, DAB2, EPS15, EPS15R, ITSN1 and clathrin; it reads HGISRGPSPV…FATGMYLVSC (281 aa). Serine 600 is subject to Phosphoserine. Positions 609–872 constitute an MHD domain; the sequence is ALPVATAFTE…RFATGMYLVS (264 aa). Over residues 816–827 the composition is skewed to polar residues; the sequence is LSASWQPQSGPS.

Belongs to the FCHO family. As to quaternary structure, may oligomerize and form homotetramer. Interacts with AP2A2 and AP2B1; 2 subunits of the adaptor protein complex AP-2. Interacts with DAB2. Interacts with clathrin (CLTC or CLTCL1). Interacts with EPS15, EPS15R and ITSN1. Interacts with AGFG1 and CALM. May interact with ACVR1; linking this receptor to clathrin-mediated endocytosis. As to expression, mainly detected in brain and spleen.

It is found in the membrane. The protein localises to the clathrin-coated pit. Functionally, functions in an early step of clathrin-mediated endocytosis. Has both a membrane binding/bending activity and the ability to recruit proteins essential to the formation of functional clathrin-coated pits. May regulate Bmp signaling by regulating clathrin-mediated endocytosis of Bmp receptors. Involved in the regulation of T-cell poliferation and activation. Affects TCR clustering upon receptor triggering and modulates its internalisation, playing a role in TCR-dependent T-cell activation. This Mus musculus (Mouse) protein is F-BAR domain only protein 1.